The following is a 211-amino-acid chain: MSEPATTTPTPTPAGDHDAAATACKPAETTTALITCRSSSCSAQQQQQQQQQQEEPLGDDQLGELREIFRSFDRNGDGSLTQLELGSLLRSLGLKPSTDELDSLIQRADTNSNGLIEFSEFVALVAPELLYDRAPYSEDQIRRLFNIFDRDGNGFITAAELAHSMAKLGHALTVKELTGMIKEADTDGDGRISFQEFSRAITAAAFDNIFS.

Disordered stretches follow at residues 1–22 (MSEPATTTPTPTPAGDHDAAAT) and 40–60 (SCSAQQQQQQQQQQEEPLGDD). Low complexity predominate over residues 44-53 (QQQQQQQQQQ). EF-hand domains are found at residues 60–95 (DQLGELREIFRSFDRNGDGSLTQLELGSLLRSLGLK), 96–131 (PSTDELDSLIQRADTNSNGLIEFSEFVALVAPELLY), 136–171 (YSEDQIRRLFNIFDRDGNGFITAAELAHSMAKLGHA), and 172–207 (LTVKELTGMIKEADTDGDGRISFQEFSRAITAAAFD). Residues D73, N75, D77, S79, E84, D109, N111, N113, E120, D149, D151, N153, E160, D185, D187, D189, R191, and E196 each contribute to the Ca(2+) site.

Its function is as follows. Potential calcium sensor. In Oryza sativa subsp. japonica (Rice), this protein is Probable calcium-binding protein CML11 (CML11).